The sequence spans 145 residues: Ribosome-binding factor A (145 aa).

Residues M1 to R10 are compositionally biased toward basic residues. Disordered regions lie at residues M1–R21 and D124–D145.

Belongs to the RbfA family. In terms of assembly, monomer. Binds 30S ribosomal subunits, but not 50S ribosomal subunits or 70S ribosomes.

Its subcellular location is the cytoplasm. One of several proteins that assist in the late maturation steps of the functional core of the 30S ribosomal subunit. Associates with free 30S ribosomal subunits (but not with 30S subunits that are part of 70S ribosomes or polysomes). Required for efficient processing of 16S rRNA. May interact with the 5'-terminal helix region of 16S rRNA. The polypeptide is Ribosome-binding factor A (Phenylobacterium zucineum (strain HLK1)).